The chain runs to 203 residues: RNA annealing protein YRA2 (203 aa).

An N-acetylmethionine modification is found at Met-1. Disordered regions lie at residues 1–60 and 137–203; these read MDKA…REEP and QPQR…YMKG. Positions 11–20 are enriched in polar residues; it reads NSHTDSSSNH. Over residues 47–60 the composition is skewed to basic and acidic residues; it reads SRSKDRLYREREEP. The RRM domain occupies 64–138; that stretch reads KRIRISKIPL…AKIEVEIYQP (75 aa). Residues 139–153 are compositionally biased toward basic residues; the sequence is QRKHSRMNAHNRRKQ. The segment covering 154–164 has biased composition (basic and acidic residues); sequence TAQEHGRDRPG. A compositionally biased stretch (basic residues) spans 165 to 180; sequence SHYRQKPNRVSKKNKG.

It belongs to the YRA1 family. As to quaternary structure, associates with mRNPs. Interacts with YRA1.

It is found in the nucleus. Its function is as follows. Involved in export of poly(A) mRNAs from the nucleus. Recruited to the coding sequences as well as poly-A sites of active genes. This Saccharomyces cerevisiae (strain YJM789) (Baker's yeast) protein is RNA annealing protein YRA2 (YRA2).